Here is a 177-residue protein sequence, read N- to C-terminus: Bifunctional protein PyrR (177 aa).

Positions 99-111 (VVLVDDVLFTGRT) match the PRPP-binding motif.

It belongs to the purine/pyrimidine phosphoribosyltransferase family. PyrR subfamily.

It catalyses the reaction UMP + diphosphate = 5-phospho-alpha-D-ribose 1-diphosphate + uracil. Regulates the transcription of the pyrimidine nucleotide (pyr) operon in response to exogenous pyrimidines. Functionally, also displays a weak uracil phosphoribosyltransferase activity which is not physiologically significant. The sequence is that of Bifunctional protein PyrR from Geobacter sp. (strain M21).